A 214-amino-acid chain; its full sequence is Imidazole glycerol phosphate synthase subunit HisH (214 aa).

Residues 3-211 form the Glutamine amidotransferase type-1 domain; the sequence is TIAVIDYDMG…VSKVIPKNLA (209 aa). The active-site Nucleophile is Cys81. Active-site residues include His186 and Glu188.

As to quaternary structure, heterodimer of HisH and HisF.

It localises to the cytoplasm. It carries out the reaction 5-[(5-phospho-1-deoxy-D-ribulos-1-ylimino)methylamino]-1-(5-phospho-beta-D-ribosyl)imidazole-4-carboxamide + L-glutamine = D-erythro-1-(imidazol-4-yl)glycerol 3-phosphate + 5-amino-1-(5-phospho-beta-D-ribosyl)imidazole-4-carboxamide + L-glutamate + H(+). The enzyme catalyses L-glutamine + H2O = L-glutamate + NH4(+). It functions in the pathway amino-acid biosynthesis; L-histidine biosynthesis; L-histidine from 5-phospho-alpha-D-ribose 1-diphosphate: step 5/9. IGPS catalyzes the conversion of PRFAR and glutamine to IGP, AICAR and glutamate. The HisH subunit catalyzes the hydrolysis of glutamine to glutamate and ammonia as part of the synthesis of IGP and AICAR. The resulting ammonia molecule is channeled to the active site of HisF. The protein is Imidazole glycerol phosphate synthase subunit HisH of Trichodesmium erythraeum (strain IMS101).